The chain runs to 290 residues: MRIADYSVTKAILDRYGFTFKKSFGQNFLTDTNILQKIVDTAEIDKSVNVIEIGPGIGALTEFLAERAAEVMAFEIDERLVPILADTLRDFDNVQVVNQDILKADLQTQLKQFSNPDLPIKVVANLPYYITTPILMHLIESKIPFQEFVVMMQREVADRISAEPNTKAYGSLSIAVQYYMTAKIAFVVPRTVFVPAPNVDSAILKMTRRDQPLIEVQDEDFFFRVSRVGFVHRRKTLWNNLVSHFGKAEDTKARLEQGLALAGIKPSIRGEALSIQDFGRLADALKQVGL.

Asn27, Leu29, Gly54, Glu75, Asp100, and Asn125 together coordinate S-adenosyl-L-methionine.

This sequence belongs to the class I-like SAM-binding methyltransferase superfamily. rRNA adenine N(6)-methyltransferase family. RsmA subfamily.

Its subcellular location is the cytoplasm. It carries out the reaction adenosine(1518)/adenosine(1519) in 16S rRNA + 4 S-adenosyl-L-methionine = N(6)-dimethyladenosine(1518)/N(6)-dimethyladenosine(1519) in 16S rRNA + 4 S-adenosyl-L-homocysteine + 4 H(+). In terms of biological role, specifically dimethylates two adjacent adenosines (A1518 and A1519) in the loop of a conserved hairpin near the 3'-end of 16S rRNA in the 30S particle. May play a critical role in biogenesis of 30S subunits. The protein is Ribosomal RNA small subunit methyltransferase A of Streptococcus equi subsp. zooepidemicus (strain H70).